A 263-amino-acid polypeptide reads, in one-letter code: Glutamate racemase (263 aa).

Residues 12–13 and 44–45 contribute to the substrate site; these read DS and YG. C75 functions as the Proton donor/acceptor in the catalytic mechanism. 76–77 is a substrate binding site; it reads NT. The active-site Proton donor/acceptor is the C186. 187 to 188 is a substrate binding site; it reads TH.

This sequence belongs to the aspartate/glutamate racemases family.

It carries out the reaction L-glutamate = D-glutamate. The protein operates within cell wall biogenesis; peptidoglycan biosynthesis. Functionally, provides the (R)-glutamate required for cell wall biosynthesis. The protein is Glutamate racemase of Ectopseudomonas mendocina (strain ymp) (Pseudomonas mendocina).